Here is a 444-residue protein sequence, read N- to C-terminus: Elongation factor 1-alpha (444 aa).

The tr-type G domain occupies 15–236 (KPHINLAVVG…VLDTFQPPPR (222 aa)). Positions 24-31 (GHVDNGKS) are G1. Residue 24–31 (GHVDNGKS) coordinates GTP. Ser31 is a Mg(2+) binding site. The interval 80–84 (GVTIE) is G2. The interval 101–104 (DLPG) is G3. GTP contacts are provided by residues 101–105 (DLPGH) and 163–166 (NKMD). The tract at residues 163-166 (NKMD) is G4. The segment at 202-204 (SAV) is G5.

This sequence belongs to the TRAFAC class translation factor GTPase superfamily. Classic translation factor GTPase family. EF-Tu/EF-1A subfamily.

The protein localises to the cytoplasm. The enzyme catalyses GTP + H2O = GDP + phosphate + H(+). Functionally, GTP hydrolase that promotes the GTP-dependent binding of aminoacyl-tRNA to the A-site of ribosomes during protein biosynthesis. This Pyrobaculum arsenaticum (strain DSM 13514 / JCM 11321 / PZ6) protein is Elongation factor 1-alpha.